A 121-amino-acid polypeptide reads, in one-letter code: Small ribosomal subunit protein uS13 (121 aa).

The tract at residues 90–121 (RHRHGLPVRGQHTKNNARTRKGKAVAIAGKKK) is disordered.

Belongs to the universal ribosomal protein uS13 family. As to quaternary structure, part of the 30S ribosomal subunit. Forms a loose heterodimer with protein S19. Forms two bridges to the 50S subunit in the 70S ribosome.

Functionally, located at the top of the head of the 30S subunit, it contacts several helices of the 16S rRNA. In the 70S ribosome it contacts the 23S rRNA (bridge B1a) and protein L5 of the 50S subunit (bridge B1b), connecting the 2 subunits; these bridges are implicated in subunit movement. Contacts the tRNAs in the A and P-sites. This is Small ribosomal subunit protein uS13 from Limosilactobacillus fermentum (strain NBRC 3956 / LMG 18251) (Lactobacillus fermentum).